The sequence spans 511 residues: 2,3-bisphosphoglycerate-independent phosphoglycerate mutase (511 aa).

Residues Asp14 and Ser64 each coordinate Mn(2+). The active-site Phosphoserine intermediate is Ser64. Residues His125, 155 to 156 (RD), Arg187, Arg193, 259 to 262 (RADR), and Lys333 contribute to the substrate site. Positions 400, 404, 441, 442, and 460 each coordinate Mn(2+).

It belongs to the BPG-independent phosphoglycerate mutase family. In terms of assembly, monomer. Requires Mn(2+) as cofactor.

The catalysed reaction is (2R)-2-phosphoglycerate = (2R)-3-phosphoglycerate. Its pathway is carbohydrate degradation; glycolysis; pyruvate from D-glyceraldehyde 3-phosphate: step 3/5. Functionally, catalyzes the interconversion of 2-phosphoglycerate and 3-phosphoglycerate. The chain is 2,3-bisphosphoglycerate-independent phosphoglycerate mutase from Idiomarina loihiensis (strain ATCC BAA-735 / DSM 15497 / L2-TR).